The following is a 1095-amino-acid chain: Formin-like protein 2 (1095 aa).

Residues 23 to 469 form the GBD/FH3 domain; the sequence is LPMPEPGELE…EAIQRQSTLE (447 aa). The stretch at 381-478 forms a coiled coil; that stretch reads LLEDAETKNA…EKKIHELEKQ (98 aa). The tract at residues 521–602 is disordered; it reads PSSGPLPPPP…PSAPPLPGTS (82 aa). Pro residues-rich tracts occupy residues 524–534, 548–576, and 583–599; these read GPLPPPPPPLP, ATPP…PLPG, and PAPP…PPLP. Residues 617 to 1008 enclose the FH2 domain; the sequence is IKKPIKTKFR…LMEKLLEQEA (392 aa).

Belongs to the formin homology family. Interacts with TCP11L2; this interaction promotes muscle-derived satellite cell (MDSC) migration and differentiation.

Its subcellular location is the cytoplasm. In terms of biological role, plays a role in the regulation of cell morphology and cytoskeletal organization. Required in the cortical actin filament dynamics. This chain is Formin-like protein 2, found in Bos taurus (Bovine).